The sequence spans 496 residues: Glutamyl-tRNA(Gln) amidotransferase subunit A (496 aa).

Catalysis depends on charge relay system residues Lys-75 and Ser-150. Catalysis depends on Ser-174, which acts as the Acyl-ester intermediate.

The protein belongs to the amidase family. GatA subfamily. As to quaternary structure, heterotrimer of A, B and C subunits.

The catalysed reaction is L-glutamyl-tRNA(Gln) + L-glutamine + ATP + H2O = L-glutaminyl-tRNA(Gln) + L-glutamate + ADP + phosphate + H(+). Allows the formation of correctly charged Gln-tRNA(Gln) through the transamidation of misacylated Glu-tRNA(Gln) in organisms which lack glutaminyl-tRNA synthetase. The reaction takes place in the presence of glutamine and ATP through an activated gamma-phospho-Glu-tRNA(Gln). The sequence is that of Glutamyl-tRNA(Gln) amidotransferase subunit A from Burkholderia pseudomallei (strain 668).